Consider the following 277-residue polypeptide: MNKNSQQKAAHVTTRRLYDMKQNGEKISVLTAYDYTMARILDRAGIDVILVGDSASNVFSGHNTTLPITVDELIYHAKGVVRGVQAETSRAMVVVDMPFMSYQLSPEDALRNAGKIMKEHECDAVKMEGGRTIADTVRRITDAGIPVMGHLGLMPQSIYKYGSYKVRAEDPAEAEELLEDAVTLERSGAFAVVLEKIPAGLAAEISRLLSIPTIGIGAGAECDGQVLVVNDILGLNREFHPRFVRQYADLNTVIEQAVRQYVEDVRSGGFPSVDESY.

Mg(2+)-binding residues include Asp53 and Asp96. 3-methyl-2-oxobutanoate is bound by residues 53–54 (DS), Asp96, and Lys126. A Mg(2+)-binding site is contributed by Glu128. Glu195 acts as the Proton acceptor in catalysis.

The protein belongs to the PanB family. As to quaternary structure, homodecamer; pentamer of dimers. Mg(2+) serves as cofactor.

The protein resides in the cytoplasm. The catalysed reaction is 3-methyl-2-oxobutanoate + (6R)-5,10-methylene-5,6,7,8-tetrahydrofolate + H2O = 2-dehydropantoate + (6S)-5,6,7,8-tetrahydrofolate. Its pathway is cofactor biosynthesis; (R)-pantothenate biosynthesis; (R)-pantoate from 3-methyl-2-oxobutanoate: step 1/2. Its function is as follows. Catalyzes the reversible reaction in which hydroxymethyl group from 5,10-methylenetetrahydrofolate is transferred onto alpha-ketoisovalerate to form ketopantoate. This is 3-methyl-2-oxobutanoate hydroxymethyltransferase from Chlorobium luteolum (strain DSM 273 / BCRC 81028 / 2530) (Pelodictyon luteolum).